We begin with the raw amino-acid sequence, 355 residues long: NAD-dependent protein deacylase sirtuin-6 (355 aa).

An N-acetylserine modification is found at S2. S10 carries the phosphoserine modification. The Deacetylase sirtuin-type domain occupies 27-272 (PEELERKVWE…TRLMKHLGLE (246 aa)). K33 carries the N6-acetyllysine modification. 7 residues coordinate NAD(+): A53, T57, F64, R65, W71, Q113, and H133. The active-site Proton acceptor is the H133. Zn(2+) is bound by residues C141, C144, and C166. K170 participates in a covalent cross-link: Glycyl lysine isopeptide (Lys-Gly) (interchain with G-Cter in ubiquitin). Residue C177 participates in Zn(2+) binding. 5 residues coordinate NAD(+): G214, S216, N240, Q242, and V258. The interval 284 to 355 (RALPPLPRPP…KRVKAEAVPS (72 aa)) is disordered. The segment covering 287-296 (PPLPRPPTPK) has biased composition (pro residues). T294 bears the Phosphothreonine mark. 2 positions are modified to phosphoserine: S303 and S330.

This sequence belongs to the sirtuin family. Class IV subfamily. In terms of assembly, homodimer; binds to nucleosomes and DNA ends as a homodimer. Interacts with RELA; interferes with RELA binding to target DNA. Interacts with SMARCA5; promoting recruitment of SMARCA5/SNF2H to double-strand breaks (DSBs) sites. Interacts with the mTORC2 complex; preventing the ability of SIRT6 to deacetylate FOXO1. Interacts with the CLOCK-BMAL1 complex; recruited by the CLOCK-BMAL1 complex to regulate expression of clock-controlled genes. Interacts with CSNK2A2; preventing CSNK2A2 localization to the nucleus. Acetylated at Lys-33. Deacetylation at Lys-33 by SIRT1 promotes homomultimerization and binding to double-strand breaks (DSBs) sites. In terms of processing, phosphorylation at Ser-10 by MAPK8/JNK1 in response to oxidative stress stimulates the mono-ADP-ribosyltransferase activity on PARP1, leading to PARP1 recruitment to double-strand breaks (DSBs). Post-translationally, monoubiquitinated at Lys-170 by STUB1/CHIP, preventing its degradation by the proteasome. Sumoylated, leading to specifically decrease ability to deacetylate histone H3 at 'Lys-56' (H3K56ac).

Its subcellular location is the nucleus. It is found in the chromosome. The protein resides in the telomere. It localises to the endoplasmic reticulum. The catalysed reaction is N(6)-acetyl-L-lysyl-[protein] + NAD(+) + H2O = 2''-O-acetyl-ADP-D-ribose + nicotinamide + L-lysyl-[protein]. The enzyme catalyses N(6)-tetradecanoyl-L-lysyl-[protein] + NAD(+) + H2O = 2''-O-tetradecanoyl-ADP-D-ribose + nicotinamide + L-lysyl-[protein]. It catalyses the reaction N(6)-hexadecanoyl-L-lysyl-[protein] + NAD(+) + H2O = 2''-O-hexadecanoyl-ADP-D-ribose + nicotinamide + L-lysyl-[protein]. It carries out the reaction L-lysyl-[protein] + NAD(+) = N(6)-(ADP-D-ribosyl)-L-lysyl-[protein] + nicotinamide + H(+). The catalysed reaction is L-arginyl-[protein] + NAD(+) = N(omega)-(ADP-D-ribosyl)-L-arginyl-[protein] + nicotinamide + H(+). Compared to the defatty-acylase activity, the protein deacetylase activity is weak in vitro, and requires activation. The histone deacetylase activity is strongly activated upon binding to nucleosomes and chromatin in vivo. Two molecules of SIRT6 associate with the acidic patch of one nucleosome, while the C-terminal disordered region of SIRT6 associates with nucleosomal DNA, leading to efficient histone deacetylation. The protein-lysine deacetylase activity is also activated by long-chain free fatty-acids. NAD-dependent protein deacetylase, deacylase and mono-ADP-ribosyltransferase that plays an essential role in DNA damage repair, telomere maintenance, metabolic homeostasis, inflammation, tumorigenesis and aging. Displays protein-lysine deacetylase or defatty-acylase (demyristoylase and depalmitoylase) activity, depending on the context. Acts as a key histone deacetylase by catalyzing deacetylation of histone H3 at 'Lys-9', 'Lys-18' and 'Lys-56' (H3K9ac, H3K18ac and H3K56ac, respectively), suppressing target gene expression of several transcription factors, including NF-kappa-B. Acts as an inhibitor of transcription elongation by mediating deacetylation of H3K9ac and H3K56ac, preventing release of NELFE from chromatin and causing transcriptional pausing. Involved in DNA repair by promoting double-strand break (DSB) repair: acts as a DSB sensor by recognizing and binding DSB sites, leading to (1) recruitment of DNA repair proteins, such as SMARCA5/SNF2H, and (2) deacetylation of histone H3K9ac and H3K56ac. SIRT6 participation to DSB repair is probably involved in extension of life span. Also promotes DNA repair by deacetylating non-histone proteins, such as DDB2 and p53/TP53. Specifically deacetylates H3K18ac at pericentric heterochromatin, thereby maintaining pericentric heterochromatin silencing at centromeres and protecting against genomic instability and cellular senescence. Involved in telomere maintenance by catalyzing deacetylation of histone H3 in telomeric chromatin, regulating telomere position effect and telomere movement in response to DNA damage. Required for embryonic stem cell differentiation by mediating histone deacetylation of H3K9ac. Plays a major role in metabolism by regulating processes such as glycolysis, gluconeogenesis, insulin secretion and lipid metabolism. Inhibits glycolysis via histone deacetylase activity and by acting as a corepressor of the transcription factor HIF1A, thereby controlling the expression of multiple glycolytic genes. Has tumor suppressor activity by repressing glycolysis, thereby inhibiting the Warburg effect. Also regulates glycolysis and tumorigenesis by mediating deacetylation and nuclear export of non-histone proteins, such as isoform M2 of PKM (PKM2). Acts as a negative regulator of gluconeogenesis by mediating deacetylation of non-histone proteins, such as FOXO1 and KAT2A/GCN5. Promotes beta-oxidation of fatty acids during fasting by catalyzing deacetylation of NCOA2, inducing coactivation of PPARA. Acts as a regulator of lipid catabolism in brown adipocytes, both by catalyzing deacetylation of histones and non-histone proteins, such as FOXO1. Also acts as a regulator of circadian rhythms, both by regulating expression of clock-controlled genes involved in lipid and carbohydrate metabolism, and by catalyzing deacetylation of PER2. The defatty-acylase activity is specifically involved in regulation of protein secretion. Has high activity toward long-chain fatty acyl groups and mediates protein-lysine demyristoylation and depalmitoylation of target proteins, such as RRAS2 and TNF, thereby regulating their secretion. Also acts as a mono-ADP-ribosyltransferase by mediating mono-ADP-ribosylation of PARP1, TRIM28/KAP1 or SMARCC2/BAF170. Mono-ADP-ribosyltransferase activity is involved in DNA repair, cellular senescence, repression of LINE-1 retrotransposon elements and regulation of transcription. The sequence is that of NAD-dependent protein deacylase sirtuin-6 from Macaca fascicularis (Crab-eating macaque).